A 1108-amino-acid chain; its full sequence is Unconventional myosin-Ie (1108 aa).

One can recognise a Myosin motor domain in the interval 19–692 (SGVDDMVLLS…SLFLLEEMRE (674 aa)). ATP is bound at residue 112 to 119 (GESGAGKT). The interval 581–591 (PHYIRCIKPNE) is actin-binding. Residues 695 to 724 (YDGYARVIQKSWRKFVARKKYVQMREEASD) form the IQ domain. In terms of domain architecture, TH1 spans 730–922 (KERRRNSINR…NKVLQVSIGP (193 aa)). The disordered stretch occupies residues 919-966 (SIGPGLPKNSRPTRRNTTQNTGYSSGTQNANYPVRAAPPPPGYHQNGV). The span at 933-949 (RNTTQNTGYSSGTQNAN) shows a compositional bias: polar residues. A phosphoserine mark is found at Ser-980 and Ser-1002. The disordered stretch occupies residues 993-1053 (ARPPLPRQQS…KPQPKPKPQV (61 aa)). Over residues 999–1013 (RQQSTSSDRVSQTPE) the composition is skewed to polar residues. Positions 1035–1052 (RPPPAGGRPKPQPKPKPQ) are enriched in pro residues. The SH3 domain maps to 1051–1108 (PQVPQCKALYAYDAQDTDELSFNANDIIDIIKEDPSGWWTGRLRGKQGLFPNNYVTKI).

Belongs to the TRAFAC class myosin-kinesin ATPase superfamily. Myosin family. In terms of assembly, interacts with CALM and F-actin. Interacts (via SH3 domain) with SYNJ1, DNM1 and DNM2. Interacts with ARL14EP. Interacts with CARMIL1. As to expression, expressed in the immune system. In the kidney, predominantly expressed in the glomerulus, including podocytes.

The protein resides in the cytoplasm. It localises to the cytoskeleton. Its subcellular location is the cytoplasmic vesicle. It is found in the clathrin-coated vesicle. The protein localises to the cell junction. Actin-based motor molecule with ATPase activity. Unconventional myosins serve in intracellular movements. Their highly divergent tails bind to membranous compartments, which are then moved relative to actin filaments. Binds to membranes containing anionic phospholipids via its tail domain. Involved in clathrin-mediated endocytosis and intracellular movement of clathrin-coated vesicles. Required for normal morphology of the glomerular basement membrane, normal development of foot processes by kidney podocytes and normal kidney function. In dendritic cells, may control the movement of class II-containing cytoplasmic vesicles along the actin cytoskeleton by connecting them with the actin network via ARL14EP and ARL14. The chain is Unconventional myosin-Ie (MYO1E) from Homo sapiens (Human).